Consider the following 386-residue polypeptide: uncharacterized protein (386 aa).

11 consecutive transmembrane segments (helical) span residues Trp-3–Ile-23, Leu-42–Trp-62, Phe-72–Gly-92, Val-102–Phe-122, Ile-145–Phe-165, Phe-183–Leu-203, Trp-212–Leu-232, Thr-244–Val-264, Ile-276–Gly-296, Val-308–Gly-328, and Leu-333–Ser-353.

The protein to R.prowazekii RP382.

The protein resides in the cell membrane. This is an uncharacterized protein from Aquifex aeolicus (strain VF5).